A 334-amino-acid chain; its full sequence is UDP-glucose 4-epimerase (334 aa).

Residues 11 to 12 (YI), 31 to 36 (DNLQKG), 50 to 51 (DI), 72 to 76 (FAANS), N91, T116, Y140, K144, and F168 each bind NAD(+). Residues T116 and Y140 each contribute to the substrate site. Y140 (proton acceptor) is an active-site residue. Residues N169, 188–189 (HL), 205–207 (AIF), R220, and 281–284 (RSGD) each bind substrate.

The protein belongs to the NAD(P)-dependent epimerase/dehydratase family. As to quaternary structure, homodimer. NAD(+) serves as cofactor.

The enzyme catalyses UDP-alpha-D-glucose = UDP-alpha-D-galactose. The protein operates within carbohydrate metabolism; galactose metabolism. In terms of biological role, involved in the metabolism of galactose. Catalyzes the conversion of UDP-galactose (UDP-Gal) to UDP-glucose (UDP-Glc) through a mechanism involving the transient reduction of NAD. This Halalkalibacterium halodurans (strain ATCC BAA-125 / DSM 18197 / FERM 7344 / JCM 9153 / C-125) (Bacillus halodurans) protein is UDP-glucose 4-epimerase (galE).